The chain runs to 246 residues: C-X-C motif chemokine 16 (246 aa).

Residues 1–26 (MRRGFGPLSLAFFLFLLALLTLPGDG) form the signal peptide. The Extracellular segment spans residues 27–201 (NQGSVAGSCS…PGAGASTPAW (175 aa)). Cystine bridges form between Cys-35-Cys-65 and Cys-37-Cys-79. 2 disordered regions span residues 104 to 150 (GKSF…SGAL) and 175 to 198 (PEAEANEKQQDDRQQEAPGAGAST). Polar residues predominate over residues 128–146 (PSDTSTPAHSQSTQHSTLP). Positions 175–189 (PEAEANEKQQDDRQQ) are enriched in basic and acidic residues. The chain crosses the membrane as a helical span at residues 202-222 (VPVLSLLAIVFFLTAAMAYVL). Topologically, residues 223 to 246 (CNRRATQQNSAGLQLWYTPVEPRP) are cytoplasmic.

The protein belongs to the intercrine alpha (chemokine CxC) family. Post-translationally, glycosylated. In terms of tissue distribution, widely expressed. Not detected in purified B- and T-cells.

Its subcellular location is the membrane. Its function is as follows. Induces a strong chemotactic response. Induces calcium mobilization. Binds to CXCR6/Bonzo. Also acts as a scavenger receptor on macrophages, which specifically binds to OxLDL (oxidized low density lipoprotein), suggesting that it may be involved in pathophysiology such as atherogenesis. This chain is C-X-C motif chemokine 16 (Cxcl16), found in Mus musculus (Mouse).